Here is a 429-residue protein sequence, read N- to C-terminus: Enolase (429 aa).

A (2R)-2-phosphoglycerate-binding site is contributed by glutamine 162. Glutamate 204 serves as the catalytic Proton donor. The Mg(2+) site is built by aspartate 241, glutamate 283, and aspartate 310. (2R)-2-phosphoglycerate is bound by residues lysine 335, arginine 364, serine 365, and lysine 386. Lysine 335 serves as the catalytic Proton acceptor.

It belongs to the enolase family. Mg(2+) is required as a cofactor.

It is found in the cytoplasm. The protein localises to the secreted. It localises to the cell surface. It catalyses the reaction (2R)-2-phosphoglycerate = phosphoenolpyruvate + H2O. It participates in carbohydrate degradation; glycolysis; pyruvate from D-glyceraldehyde 3-phosphate: step 4/5. Its function is as follows. Catalyzes the reversible conversion of 2-phosphoglycerate (2-PG) into phosphoenolpyruvate (PEP). It is essential for the degradation of carbohydrates via glycolysis. In Mycolicibacterium vanbaalenii (strain DSM 7251 / JCM 13017 / BCRC 16820 / KCTC 9966 / NRRL B-24157 / PYR-1) (Mycobacterium vanbaalenii), this protein is Enolase.